We begin with the raw amino-acid sequence, 524 residues long: Putative UDP-glucuronosyltransferase ugt-56 (524 aa).

The N-terminal stretch at 1 to 20 is a signal peptide; the sequence is MLWAFIVWLGALCIYGSAFD. Residues asparagine 125, asparagine 277, and asparagine 335 are each glycosylated (N-linked (GlcNAc...) asparagine). A helical transmembrane segment spans residues 488–508; that stretch reads LIDSSIALVFMLFIFVFVNHF.

It belongs to the UDP-glycosyltransferase family.

The protein resides in the membrane. It carries out the reaction glucuronate acceptor + UDP-alpha-D-glucuronate = acceptor beta-D-glucuronoside + UDP + H(+). The protein is Putative UDP-glucuronosyltransferase ugt-56 (ugt-56) of Caenorhabditis elegans.